The sequence spans 1409 residues: DNA-directed RNA polymerase subunit beta' (1409 aa).

The Zn(2+) site is built by cysteine 70, cysteine 72, cysteine 85, and cysteine 88. Positions 460, 462, and 464 each coordinate Mg(2+). Residues cysteine 814, cysteine 888, cysteine 895, and cysteine 898 each contribute to the Zn(2+) site.

The protein belongs to the RNA polymerase beta' chain family. As to quaternary structure, the RNAP catalytic core consists of 2 alpha, 1 beta, 1 beta' and 1 omega subunit. When a sigma factor is associated with the core the holoenzyme is formed, which can initiate transcription. Requires Mg(2+) as cofactor. Zn(2+) is required as a cofactor.

The catalysed reaction is RNA(n) + a ribonucleoside 5'-triphosphate = RNA(n+1) + diphosphate. In terms of biological role, DNA-dependent RNA polymerase catalyzes the transcription of DNA into RNA using the four ribonucleoside triphosphates as substrates. The chain is DNA-directed RNA polymerase subunit beta' from Shewanella violacea.